A 351-amino-acid polypeptide reads, in one-letter code: Dihydroorotate dehydrogenase (quinone) (351 aa).

FMN is bound by residues A67–K71 and T91. K71 is a binding site for substrate. N116–F120 lines the substrate pocket. The FMN site is built by N145 and N178. N178 is a binding site for substrate. S181 serves as the catalytic Nucleophile. Position 183 (N183) interacts with substrate. 2 residues coordinate FMN: K214 and T242. Residue N243–T244 participates in substrate binding. FMN is bound by residues G262, G291, and Y312 to T313.

The protein belongs to the dihydroorotate dehydrogenase family. Type 2 subfamily. Monomer. FMN is required as a cofactor.

It is found in the cell membrane. The catalysed reaction is (S)-dihydroorotate + a quinone = orotate + a quinol. Its pathway is pyrimidine metabolism; UMP biosynthesis via de novo pathway; orotate from (S)-dihydroorotate (quinone route): step 1/1. Catalyzes the conversion of dihydroorotate to orotate with quinone as electron acceptor. In Nitratiruptor sp. (strain SB155-2), this protein is Dihydroorotate dehydrogenase (quinone).